Reading from the N-terminus, the 211-residue chain is 5,6-dimethylbenzimidazole synthase (211 aa).

FMN contacts are provided by residues 22-26 (RRDVR), S50, L99, and S158.

The protein belongs to the BluB family. As to quaternary structure, homooctamer.

It catalyses the reaction FMNH2 + O2 = dialurate + 5,6-dimethylbenzimidazole + D-erythrose 4-phosphate + H(+). Functionally, involved in the biosynthesis of cobalamin (vitamin B12). Catalyzes the oxidative fragmentation and contraction of the isoalloxazine heterocycle and the cleavage of the ribityl tail of FMNH(2) to form 5,6-dimethylbenzimidazole (DMB) and D-erythrose 4-phosphate (E4P). NAD(P)H is only required initially to reduce FMN and oxygen drives the oxidative fragmentation. The sequence is that of 5,6-dimethylbenzimidazole synthase from Rhodospirillum rubrum (strain ATCC 11170 / ATH 1.1.1 / DSM 467 / LMG 4362 / NCIMB 8255 / S1).